We begin with the raw amino-acid sequence, 1717 residues long: Protein MON2 homolog (1717 aa).

The residue at position 2 (Ser2) is an N-acetylserine. A phosphoserine mark is found at Ser205 and Ser537. A disordered region spans residues 511–538; that stretch reads ETECQTTTEEGSSPTQSTEQQDLQSTSD. A compositionally biased stretch (polar residues) spans 522–538; sequence SSPTQSTEQQDLQSTSD.

This sequence belongs to the MON2 family. In terms of assembly, homooligomer. Heterotrimer with ATP9A and DOP1B; this interaction is retromer-independent. Interacts with SNX3.

The protein localises to the early endosome membrane. Functionally, plays a role in regulating membrane trafficking of cargo proteins. Together with ATP9A and DOP1B, regulates SNX3 retromer-mediated endosomal sorting of WLS away from lysosomal degradation. This is Protein MON2 homolog from Homo sapiens (Human).